Here is a 214-residue protein sequence, read N- to C-terminus: tRNA (guanine-N(7)-)-methyltransferase (214 aa).

Glu-43, Glu-68, Asn-99, and Asp-121 together coordinate S-adenosyl-L-methionine. Asp-121 is an active-site residue. Residues Lys-125, Asp-157, and 194–197 (TEYE) contribute to the substrate site.

This sequence belongs to the class I-like SAM-binding methyltransferase superfamily. TrmB family.

The enzyme catalyses guanosine(46) in tRNA + S-adenosyl-L-methionine = N(7)-methylguanosine(46) in tRNA + S-adenosyl-L-homocysteine. Its pathway is tRNA modification; N(7)-methylguanine-tRNA biosynthesis. Its function is as follows. Catalyzes the formation of N(7)-methylguanine at position 46 (m7G46) in tRNA. The protein is tRNA (guanine-N(7)-)-methyltransferase of Alkaliphilus metalliredigens (strain QYMF).